The chain runs to 161 residues: Nucleotide-binding protein Plav_2177 (161 aa).

The protein belongs to the YajQ family.

Nucleotide-binding protein. The protein is Nucleotide-binding protein Plav_2177 of Parvibaculum lavamentivorans (strain DS-1 / DSM 13023 / NCIMB 13966).